Here is a 138-residue protein sequence, read N- to C-terminus: Centromere protein S (138 aa).

Methionine 1 is subject to N-acetylmethionine. Positions 110–138 (RKAQKKKKSEDGSKNSRQPAEAGVVESEN) are disordered.

Belongs to the TAF9 family. CENP-S/MHF1 subfamily. In terms of assembly, heterodimer with CENPX, sometimes called MHF; this interaction stabilizes both partners. MHF heterodimers can assemble to form tetrameric structures. MHF also coassemble with CENPT-CENPW heterodimers at centromeres to form the tetrameric CENP-T-W-S-X complex. Forms a discrete complex with FANCM and CENPX, called FANCM-MHF; this interaction, probably mediated by direct binding between CENPS and FANCM, leads to synergistic activation of double-stranded DNA binding and strongly stimulates FANCM-mediated DNA remodeling. Recruited by FANCM to the Fanconi anemia (FA) core complex, which consists of CENPS, CENPX, FANCA, FANCB, FANCC, FANCE, FANCF, FANCG, FANCL, FANCM, FAAP24 and FAAP100. The FA core complex associates with Bloom syndrome (BLM) complex, which consists of at least BLM, DNA topoisomerase 3-alpha (TOP3A), RMI1/BLAP75, RPA1/RPA70 and RPA2/RPA32. The super complex between FA and BLM is called BRAFT. Component of the CENPA-CAD complex, composed of CENPI, CENPK, CENPL, CENPO, CENPP, CENPQ, CENPR and CENPS. The CENPA-CAD complex is probably recruited on centromeres by the CENPA-NAC complex, composed of at least CENPA, CENPC, CENPH, CENPM, CENPN, CENPT and CENPU. As to expression, ubiquitously expressed.

Its subcellular location is the nucleus. The protein localises to the chromosome. The protein resides in the centromere. It is found in the kinetochore. DNA-binding component of the Fanconi anemia (FA) core complex. Required for the normal activation of the FA pathway, leading to monoubiquitination of the FANCI-FANCD2 complex in response to DNA damage, cellular resistance to DNA cross-linking drugs, and prevention of chromosomal breakage. In complex with CENPX (MHF heterodimer), crucial cofactor for FANCM in both binding and ATP-dependent remodeling of DNA. Stabilizes FANCM. In complex with CENPX and FANCM (but not other FANC proteins), rapidly recruited to blocked forks and promotes gene conversion at blocked replication forks. In complex with CENPT, CENPW and CENPX (CENP-T-W-S-X heterotetramer), involved in the formation of a functional kinetochore outer plate, which is essential for kinetochore-microtubule attachment and faithful mitotic progression. As a component of MHF and CENP-T-W-S-X complexes, binds DNA and bends it to form a nucleosome-like structure. DNA-binding function is fulfilled in the presence of CENPX, with the following preference for DNA substates: Holliday junction &gt; double-stranded &gt; splay arm &gt; single-stranded. Does not bind DNA on its own. In Homo sapiens (Human), this protein is Centromere protein S (CENPS).